The chain runs to 138 residues: MFTSLHTPILHPRYCHHPTPSCTQFSPLALPPFHRTLSFLAPPPLLPAAPALSAASAAKPDKSGEQKWVHEGLIMESLPNGMFRVRLDNEDLILGYISGKIRKNYVRILPGDRVKVEVTRYDSSKGRIVYRLRSSTPS.

The transit peptide at 1–53 (MFTSLHTPILHPRYCHHPTPSCTQFSPLALPPFHRTLSFLAPPPLLPAAPALS) directs the protein to the chloroplast. One can recognise an S1-like domain in the interval 58–133 (AKPDKSGEQK…SKGRIVYRLR (76 aa)).

The protein belongs to the IF-1 family. Component of the 30S ribosomal translation pre-initiation complex which assembles on the 30S ribosome in the order IF-2 and IF-3, IF-1 and N-formylmethionyl-tRNA(fMet); mRNA recruitment can occur at any time during PIC assembly.

The protein resides in the plastid. It is found in the chloroplast. In terms of biological role, one of the essential components for the initiation of protein synthesis. Stabilizes the binding of IF-2 and IF-3 on the 30S subunit to which N-formylmethionyl-tRNA(fMet) subsequently binds. Helps modulate mRNA selection, yielding the 30S pre-initiation complex (PIC). Upon addition of the 50S ribosomal subunit IF-1, IF-2 and IF-3 are released leaving the mature 70S translation initiation complex. This is Translation initiation factor IF-1, chloroplastic (infA) from Glycine max (Soybean).